The primary structure comprises 633 residues: Extracellular metalloproteinase 3 (633 aa).

The signal sequence occupies residues 1–18 (MHGLLLAGLLALPMNVLA). A propeptide spanning residues 19-246 (HPAEQHASNV…VHNVVDYVAS (228 aa)) is cleaved from the precursor. N-linked (GlcNAc...) asparagine glycosylation occurs at N410. Residue H429 coordinates Zn(2+). The active site involves E430. H433 serves as a coordination point for Zn(2+). N-linked (GlcNAc...) asparagine glycans are attached at residues N480 and N622.

It belongs to the peptidase M36 family. It depends on Zn(2+) as a cofactor.

The protein resides in the secreted. Secreted metalloproteinase probably acting as a virulence factor. In Trichophyton equinum (Horse ringworm fungus), this protein is Extracellular metalloproteinase 3 (MEP3).